The primary structure comprises 110 residues: Iron-sulfur cluster assembly protein CyaY (110 aa).

This sequence belongs to the frataxin family.

Involved in iron-sulfur (Fe-S) cluster assembly. May act as a regulator of Fe-S biogenesis. This chain is Iron-sulfur cluster assembly protein CyaY, found in Pseudomonas putida (strain GB-1).